We begin with the raw amino-acid sequence, 247 residues long: Small ribosomal subunit protein uS3 (247 aa).

Residues 18 to 87 (IDEYLAKRFY…NPQITVRRVE (70 aa)) enclose the KH type-2 domain. The interval 226–247 (QQGEVVGEAPNTPLEEQGQKQG) is disordered.

The protein belongs to the universal ribosomal protein uS3 family. In terms of assembly, part of the 30S ribosomal subunit.

Its function is as follows. Binds the lower part of the 30S subunit head. In Hyperthermus butylicus (strain DSM 5456 / JCM 9403 / PLM1-5), this protein is Small ribosomal subunit protein uS3.